The primary structure comprises 204 residues: Prephenate decarboxylase (204 aa).

This sequence belongs to the prephenate decarboxylase family.

The protein resides in the cytoplasm. It catalyses the reaction prephenate + H(+) = 3-[(4R)-4-hydroxycyclohexa-1,5-dien-1-yl]-2-oxopropanoate + CO2. It functions in the pathway antibiotic biosynthesis; bacilysin biosynthesis. Functionally, part of the bacABCDEF operon responsible for the biosynthesis of the nonribosomally synthesized dipeptide antibiotic bacilysin, composed of L-alanine and L-anticapsin. Bacilysin is an irreversible inactivator of the glutaminase domain of glucosamine synthetase. BacA is an unusual prephenate decarboxylase that avoids the typical aromatization of the cyclohexadienol ring of prephenate. BacA catalyzes the protonation of prephenate (1-carboxy-4-hydroxy-alpha-oxo-2,5-cyclohexadiene-1-propanoic acid) at C6 position, followed by a decarboxylation to produce the endocyclic-delta(4),delta(8)-7R-dihydro-hydroxyphenylpyruvate (en-H2HPP). En-H2HPP is able to undergo a slow nonenzymatic isomerization to produce the exocyclic-delta(3),delta(5)-dihydro-hydroxyphenylpyruvate (ex-H2HPP). BacA isomerizes only the pro-R double bond in prephenate. The sequence is that of Prephenate decarboxylase from Bacillus subtilis (strain 168).